The chain runs to 148 residues: NTR domain-containing protein (148 aa).

The signal sequence occupies residues 1–26; sequence MVCRFSYVQVVLILVVLSVIISWANA. Disulfide bonds link Cys-27–Cys-96, Cys-29–Cys-122, and Cys-40–Cys-146. One can recognise an NTR domain in the interval 27-146; the sequence is CSCFPPDETR…LQLFNDPQWC (120 aa).

As to expression, prismatic layer of shell (at protein level). Expressed primarily in the mantle with highest level in the mantle edge and lower level in the mantle pallium.

Its subcellular location is the secreted. The sequence is that of NTR domain-containing protein from Margaritifera margaritifera (Freshwater pearl mussel).